The sequence spans 274 residues: Regulator of G-protein signaling rgs-11 (274 aa).

One can recognise an RGS domain in the interval 137-256; the sequence is SPGLLAASKY…LEDPLYLDLL (120 aa).

This is Regulator of G-protein signaling rgs-11 (rgs-11) from Caenorhabditis elegans.